The chain runs to 537 residues: Tegument protein BRRF2 (537 aa).

2 disordered regions span residues 322-466 (PRFL…AEEF) and 486-537 (GLRV…LSVV). Positions 334 to 347 (EPQQTCSQLTSRGN) are enriched in polar residues. Low complexity predominate over residues 420 to 441 (VTGSSQAAPSSSSVTPVASLSG). Positions 492–517 (DEDEDGSEDGEFSDLDLSDSDHEGDE) are enriched in acidic residues.

This sequence belongs to the lymphocryptovirus BRRF2 family.

It localises to the virion tegument. This chain is Tegument protein BRRF2, found in Homo sapiens (Human).